The following is a 623-amino-acid chain: Aspartate--tRNA(Asp/Asn) ligase (623 aa).

Glu-175 is an L-aspartate binding site. The interval 199 to 202 (QQYK) is aspartate. Residues Arg-221 and His-483 each coordinate L-aspartate. 221 to 223 (RDE) lines the ATP pocket. Glu-517 provides a ligand contact to ATP. Arg-524 contributes to the L-aspartate binding site. Residue 569-572 (GVDR) coordinates ATP.

The protein belongs to the class-II aminoacyl-tRNA synthetase family. Type 1 subfamily. As to quaternary structure, homodimer.

Its subcellular location is the cytoplasm. The enzyme catalyses tRNA(Asx) + L-aspartate + ATP = L-aspartyl-tRNA(Asx) + AMP + diphosphate. Its function is as follows. Aspartyl-tRNA synthetase with relaxed tRNA specificity since it is able to aspartylate not only its cognate tRNA(Asp) but also tRNA(Asn). Reaction proceeds in two steps: L-aspartate is first activated by ATP to form Asp-AMP and then transferred to the acceptor end of tRNA(Asp/Asn). This is Aspartate--tRNA(Asp/Asn) ligase from Xanthobacter autotrophicus (strain ATCC BAA-1158 / Py2).